The chain runs to 883 residues: MSKELSPKYNPAEVEAGRYQKWLDADVFKPSGDQKAKPYSIVIPPPNVTGKLHLGHAWDTTLQDIIIRQKRMQGFDTLWLPGMDHAGIATQAKVEERLRGEGITRYDLGRESFLTKVWEWKDEYATTIKEQWGKMGLSVDYSRERFTLDEGLSKAVRKVFVNLYKKGWIYRGEFIINWDPAARTALSDIEVIHKDVEGAFYHMNYMLEDGSRALEVATTRPETMFGDVAVAVNPEDPRYKDLIGKNVILPIANKLIPIVGDEHADPELGTGVVKITPAHDPNDFLVGQRHNLPQVNVMNDDGTMNELAFEFSGMDRFEARKAVVAKLEEIGALVKIEKRVHSVGHSERTGVVVEPRLSTQWFVKMDQLAKNAIANQDTEDKVEFYPPRFNDTFLQWMENVHDWVISRQLWWGHQIPAWYNADGEMYVGEEAPEGDGWTQDEDVLDTWFSSALWPFSTMGWPEVDSEDFKRYFPTSTLVTGYDIIFFWVSRMIFQSLEFTGRQPFQNVLIHGLIRDEQGRKMSKSLGNGIDPMDVIEKYGADALRWFLSNGSAPGQDVRFSYEKMDASWNFINKIWNISRYILMNNEGLTLDVAHDNVTKVATGEAGNVTDRWILHNLNETIAKVTENFDKFEFGVAGHILYNFIWEEFANWYVELTKEVLYSDNEDDKVITRSVLLYTLDKILRLLHPIMPFVTEEIFGQISEGSIVTAAYPTVNLAFEDLAAHTGVESLKDLIRAVRNARAEVNVAPSKPITILVKTSDSDLEAFFNSNVNYIKRFTNPEHLEIASTIPAPELAMSSVITGAEIYLPLADLLNVEEELARLDKELAKWQKELDMVGKKLSNERFVANAKPEVVQKECDKQADYQAKYDATVARIDEMKKLVK.

The 'HIGH' region signature appears at 46-56; the sequence is PNVTGKLHLGH. The 'KMSKS' region motif lies at 520-524; sequence KMSKS. Residue Lys-523 participates in ATP binding. Residues 809–883 adopt a coiled-coil conformation; it reads LADLLNVEEE…RIDEMKKLVK (75 aa).

This sequence belongs to the class-I aminoacyl-tRNA synthetase family. ValS type 1 subfamily. In terms of assembly, monomer.

It is found in the cytoplasm. The enzyme catalyses tRNA(Val) + L-valine + ATP = L-valyl-tRNA(Val) + AMP + diphosphate. In terms of biological role, catalyzes the attachment of valine to tRNA(Val). As ValRS can inadvertently accommodate and process structurally similar amino acids such as threonine, to avoid such errors, it has a 'posttransfer' editing activity that hydrolyzes mischarged Thr-tRNA(Val) in a tRNA-dependent manner. This chain is Valine--tRNA ligase, found in Streptococcus pneumoniae serotype 4 (strain ATCC BAA-334 / TIGR4).